A 608-amino-acid chain; its full sequence is Zinc finger protein 652 (608 aa).

Position 57 is a phosphoserine (serine 57). The segment at 61–232 (VLADTKMSKP…KRATKEAKAP (172 aa)) is disordered. A compositionally biased stretch (basic and acidic residues) spans 71 to 97 (HLHETEEQPYFREPRAVSDVHTVKEDR). Acidic residues-rich tracts occupy residues 98–108 (ENSDDTEEEEE) and 151–162 (EEDEEETEEEAT). Serine 100 carries the phosphoserine modification. Phosphothreonine is present on threonine 103. Residues 194 to 208 (AASAAAATTSPAPRT) are compositionally biased toward low complexity. A phosphoserine mark is found at serine 196 and serine 203. Residues 244–267 (LTCEKCPRVFNTRWYLEKHMNVTH) form a C2H2-type 1 zinc finger. The C2H2-type 2; degenerate zinc finger occupies 271–293 (QICDKCGKKFVLESELSLHQQTD). C2H2-type zinc fingers lie at residues 298–321 (IQCVSCNKSFKKLWSLHEHIKIVH), 328–350 (FACEICEKKFYTMAHVRKHMVAH), 356–378 (FTCETCGKSFKRSMSLKVHSLQH), 384–406 (FRCENCDERFQYKYQLRSHMSIH), 412–434 (FMCQWCGKDFNMKQYFDEHMKTH), and 440–462 (FICEICGKSFTSRPNMKRHRRTH). A C2H2-type 9; degenerate zinc finger spans residues 468–491 (YPCDVCGQRFRFSNMLKAHKEKCF). A mediates interaction with CBFA2T3 region spans residues 497 to 608 (VNVPPAVQIP…KNSAAPAQHH (112 aa)).

This sequence belongs to the krueppel C2H2-type zinc-finger protein family. In terms of assembly, interacts with CBFA2T3.

It localises to the nucleus. Functions as a transcriptional repressor. This chain is Zinc finger protein 652 (Znf652), found in Mus musculus (Mouse).